Here is a 299-residue protein sequence, read N- to C-terminus: Ornithine carbamoyltransferase (299 aa).

Carbamoyl phosphate is bound by residues 52-55 (STRT), Gln79, Arg103, and 130-133 (HPCQ). L-ornithine-binding positions include Asn161, Asp218, and 222 to 223 (SM). Carbamoyl phosphate is bound by residues 258-259 (CL) and Arg286.

This sequence belongs to the aspartate/ornithine carbamoyltransferase superfamily. OTCase family.

It localises to the cytoplasm. It catalyses the reaction carbamoyl phosphate + L-ornithine = L-citrulline + phosphate + H(+). It functions in the pathway amino-acid biosynthesis; L-arginine biosynthesis; L-arginine from L-ornithine and carbamoyl phosphate: step 1/3. Reversibly catalyzes the transfer of the carbamoyl group from carbamoyl phosphate (CP) to the N(epsilon) atom of ornithine (ORN) to produce L-citrulline. This Ruthia magnifica subsp. Calyptogena magnifica protein is Ornithine carbamoyltransferase.